The sequence spans 305 residues: Aspartate carbamoyltransferase catalytic subunit (305 aa).

Carbamoyl phosphate contacts are provided by R56 and T57. An L-aspartate-binding site is contributed by K85. Residues R106, H134, and Q137 each coordinate carbamoyl phosphate. Residues R167 and R227 each coordinate L-aspartate. Positions 266 and 267 each coordinate carbamoyl phosphate.

The protein belongs to the aspartate/ornithine carbamoyltransferase superfamily. ATCase family. Heterooligomer of catalytic and regulatory chains.

It carries out the reaction carbamoyl phosphate + L-aspartate = N-carbamoyl-L-aspartate + phosphate + H(+). It participates in pyrimidine metabolism; UMP biosynthesis via de novo pathway; (S)-dihydroorotate from bicarbonate: step 2/3. Its function is as follows. Catalyzes the condensation of carbamoyl phosphate and aspartate to form carbamoyl aspartate and inorganic phosphate, the committed step in the de novo pyrimidine nucleotide biosynthesis pathway. This chain is Aspartate carbamoyltransferase catalytic subunit, found in Thermoplasma volcanium (strain ATCC 51530 / DSM 4299 / JCM 9571 / NBRC 15438 / GSS1).